Reading from the N-terminus, the 141-residue chain is Nucleoside diphosphate kinase (141 aa).

6 residues coordinate ATP: Lys-9, Phe-57, Arg-85, Thr-91, Arg-102, and Asn-112. Residue His-115 is the Pros-phosphohistidine intermediate of the active site.

This sequence belongs to the NDK family. As to quaternary structure, homotetramer. Requires Mg(2+) as cofactor.

Its subcellular location is the cytoplasm. It carries out the reaction a 2'-deoxyribonucleoside 5'-diphosphate + ATP = a 2'-deoxyribonucleoside 5'-triphosphate + ADP. The enzyme catalyses a ribonucleoside 5'-diphosphate + ATP = a ribonucleoside 5'-triphosphate + ADP. In terms of biological role, major role in the synthesis of nucleoside triphosphates other than ATP. The ATP gamma phosphate is transferred to the NDP beta phosphate via a ping-pong mechanism, using a phosphorylated active-site intermediate. The protein is Nucleoside diphosphate kinase of Chlamydia trachomatis serovar D (strain ATCC VR-885 / DSM 19411 / UW-3/Cx).